A 721-amino-acid chain; its full sequence is Polyribonucleotide nucleotidyltransferase (721 aa).

2 residues coordinate Mg(2+): Asp511 and Asp517. The region spanning 577 to 637 (PSTDFFHINP…SGVQAAREHI (61 aa)) is the KH domain. In terms of domain architecture, S1 motif spans 654–721 (GDIHKGIVKK…KGNKISLGIA (68 aa)).

Belongs to the polyribonucleotide nucleotidyltransferase family. It depends on Mg(2+) as a cofactor.

Its subcellular location is the cytoplasm. The enzyme catalyses RNA(n+1) + phosphate = RNA(n) + a ribonucleoside 5'-diphosphate. Involved in mRNA degradation. Catalyzes the phosphorolysis of single-stranded polyribonucleotides processively in the 3'- to 5'-direction. In Sulfurimonas denitrificans (strain ATCC 33889 / DSM 1251) (Thiomicrospira denitrificans (strain ATCC 33889 / DSM 1251)), this protein is Polyribonucleotide nucleotidyltransferase.